Reading from the N-terminus, the 431-residue chain is Transmembrane protease serine 11C (431 aa).

The Cytoplasmic segment spans residues 1-33 (MARGQPRRSEEQWTALQNRTECKTKIKLTRCGK). A helical; Signal-anchor for type II membrane protein transmembrane segment spans residues 34 to 54 (ITLGILTAVLAAVLIGLIAYF). The Extracellular segment spans residues 55-431 (AACGKDSFYY…RDWITSKTGL (377 aa)). One can recognise an SEA domain in the interval 60–177 (DSFYYHVSFK…SSFKFSDIAM (118 aa)). N-linked (GlcNAc...) asparagine glycosylation occurs at asparagine 99. Positions 200-430 (VAGGQDAEEG…YRDWITSKTG (231 aa)) constitute a Peptidase S1 domain. Cysteine 225 and cysteine 241 are disulfide-bonded. The Charge relay system role is filled by histidine 240. Residue asparagine 276 is glycosylated (N-linked (GlcNAc...) asparagine). The active-site Charge relay system is the aspartate 285. A glycan (N-linked (GlcNAc...) asparagine) is linked at asparagine 347. 2 cysteine pairs are disulfide-bonded: cysteine 350/cysteine 366 and cysteine 377/cysteine 406. Serine 381 serves as the catalytic Charge relay system.

This sequence belongs to the peptidase S1 family. Proteolytically cleaved via an autocatalytic mechanism. In terms of tissue distribution, expressed specifically in Purkinje neurons of the cerebellum (at protein level). Also detected in spinal cord.

It localises to the cell membrane. It is found in the cell projection. The protein localises to the dendrite. The protein resides in the perikaryon. In terms of biological role, serine protease which has a preference for Arg or Lys in position P1 and uncharged residues in positions P2 and P3. Shows specificity towards FGF2 in vitro. The chain is Transmembrane protease serine 11C from Mus musculus (Mouse).